The primary structure comprises 170 residues: Protein GrpE (170 aa).

Residues 1-29 are disordered; it reads MSEEIKNEEIVEEVEATEEVVETPEKSEL. A compositionally biased stretch (acidic residues) spans 10–22; that stretch reads IVEEVEATEEVVE.

Belongs to the GrpE family. As to quaternary structure, homodimer.

Its subcellular location is the cytoplasm. Participates actively in the response to hyperosmotic and heat shock by preventing the aggregation of stress-denatured proteins, in association with DnaK and GrpE. It is the nucleotide exchange factor for DnaK and may function as a thermosensor. Unfolded proteins bind initially to DnaJ; upon interaction with the DnaJ-bound protein, DnaK hydrolyzes its bound ATP, resulting in the formation of a stable complex. GrpE releases ADP from DnaK; ATP binding to DnaK triggers the release of the substrate protein, thus completing the reaction cycle. Several rounds of ATP-dependent interactions between DnaJ, DnaK and GrpE are required for fully efficient folding. The protein is Protein GrpE of Streptococcus suis (strain 98HAH33).